A 667-amino-acid chain; its full sequence is Smc-like protein Sph2 (667 aa).

Coiled coils occupy residues 153-295 (GSIQ…SLAT) and 355-517 (GRLD…AITA).

It belongs to the Sph1/Sph2 family.

It is found in the cytoplasm. In terms of biological role, may play a role in replication. This chain is Smc-like protein Sph2 (sph2), found in Halobacterium salinarum (strain ATCC 29341 / DSM 671 / R1).